A 102-amino-acid polypeptide reads, in one-letter code: Large ribosomal subunit protein bL21 (102 aa).

It belongs to the bacterial ribosomal protein bL21 family. Part of the 50S ribosomal subunit. Contacts protein L20.

This protein binds to 23S rRNA in the presence of protein L20. This is Large ribosomal subunit protein bL21 from Listeria monocytogenes serotype 4b (strain CLIP80459).